The primary structure comprises 100 residues: Large ribosomal subunit protein uL23 (100 aa).

It belongs to the universal ribosomal protein uL23 family. In terms of assembly, part of the 50S ribosomal subunit. Contacts protein L29, and trigger factor when it is bound to the ribosome.

Its function is as follows. One of the early assembly proteins it binds 23S rRNA. One of the proteins that surrounds the polypeptide exit tunnel on the outside of the ribosome. Forms the main docking site for trigger factor binding to the ribosome. The sequence is that of Large ribosomal subunit protein uL23 from Shewanella oneidensis (strain ATCC 700550 / JCM 31522 / CIP 106686 / LMG 19005 / NCIMB 14063 / MR-1).